Here is a 269-residue protein sequence, read N- to C-terminus: Tryptophan synthase alpha chain (269 aa).

Residues E50 and D61 each act as proton acceptor in the active site.

This sequence belongs to the TrpA family. In terms of assembly, tetramer of two alpha and two beta chains.

The catalysed reaction is (1S,2R)-1-C-(indol-3-yl)glycerol 3-phosphate + L-serine = D-glyceraldehyde 3-phosphate + L-tryptophan + H2O. Its pathway is amino-acid biosynthesis; L-tryptophan biosynthesis; L-tryptophan from chorismate: step 5/5. Functionally, the alpha subunit is responsible for the aldol cleavage of indoleglycerol phosphate to indole and glyceraldehyde 3-phosphate. The protein is Tryptophan synthase alpha chain of Francisella tularensis subsp. holarctica (strain FTNF002-00 / FTA).